A 382-amino-acid polypeptide reads, in one-letter code: MPTISIPADPASPDQGLKPFPIQLDSKDGKSGKLVKQIRIKYLTEPNSRSPPLTFINTYGFIYARDLSGGIMNEQSSGIQSGSVTACMMTLGPGPDIKNANRVLAALNGFYVKVRKTSSLKEEAVFELVNVPKLLANHALCKQGRLVCSAEKFVKNPSKMMAGQEYLYFPTFVSLTYCPSNLNYQVAKPILKIRSRFVYSIHMEIIFRLLCKPDSPLLKTYATDPEGRGCLASVWIHVCNILKNKKIKQRGVDSYFSSKAISMQLTVSIADTWGPTVIIKANGHIPKTAAPFFSKDGVACHPLQDVSPALTKSLWSVGCEITKARLILQESNISDLLKTQDLITDQIKIKKGHSHFGRSSFNPFKKAISLPNLTQLGQDDED.

This sequence belongs to the morbillivirus/respirovirus/rubulavirus M protein family.

It localises to the virion. The M protein has a crucial role in virus assembly and interacts with the RNP complex as well as with the viral membrane. In Simiiformes (SV41), this protein is Matrix protein (M).